A 557-amino-acid chain; its full sequence is MRISRERYFELYGPTEGDKIRLGDTNLYITIEKDLIAKGDELVFGAGKTARDGLGLLPNVREEEVMDLIITNVVILDPLLGVIKADIGIKDGLIVGIGHGGNPFTMDGVNFVLGSSTEIISGEGLIATPGFIDTHIHWVAPQQVFDALSAGFTTLIGGGTGPAEGTKATTVTPGSWNIKIIAESLDYFPLNFALTAKGSSSRITMEEVLRNGASGFKIHEDWGAMPRVIDETLTVADEYDVQVTIHTDTSNESGYLEDTLNAINGRTIHAYHVEGAGGGHAPDIIKICAEPNVLPSSTNPTKPYTIHTYEEHLEMLMAVHHLNPKVPEDVAYAESRIREETMMAEDYLHDLGAISMMSSDSQAMGRVGETGIRTFQLAHKMKDLGLIQINDNERVLRYLAKITINPAITHGISDYVGTLAPGHIADIVLWDPRFFPVKPYMVIKGGAITWALMGDTNASIAYAQPVLYKPMFGYYSAKSVSFFFSATDGVENLSKIVRRRVLPVKNTRHLTKKDMKYNDILPKIEVNPDTYEVKINGIVPKVPPSKSLPLTQLYFIY.

The Urease domain maps to 130–557 (GFIDTHIHWV…LPLTQLYFIY (428 aa)). Ni(2+)-binding residues include His135, His137, and Lys217. At Lys217 the chain carries N6-carboxylysine. His219 lines the substrate pocket. Residues His246 and His272 each contribute to the Ni(2+) site. His320 serves as the catalytic Proton donor. Ni(2+) is bound at residue Asp360.

It belongs to the metallo-dependent hydrolases superfamily. Urease alpha subunit family. Heterohexamer of 3 UreC (alpha) and 3 UreAB (gamma/beta) subunits. The cofactor is Ni cation. Post-translationally, carboxylation allows a single lysine to coordinate two nickel ions.

The protein localises to the cytoplasm. It carries out the reaction urea + 2 H2O + H(+) = hydrogencarbonate + 2 NH4(+). It functions in the pathway nitrogen metabolism; urea degradation; CO(2) and NH(3) from urea (urease route): step 1/1. This Sulfurisphaera tokodaii (strain DSM 16993 / JCM 10545 / NBRC 100140 / 7) (Sulfolobus tokodaii) protein is Urease subunit alpha.